The sequence spans 221 residues: uncharacterized protein (221 aa).

An N-terminal signal peptide occupies residues 1-30; it reads MAKFNNNILLIILIIVILFIIFYFLNKNNQ.

The protein localises to the virion. This is an uncharacterized protein from Acanthamoeba polyphaga mimivirus (APMV).